A 753-amino-acid chain; its full sequence is 5-methyltetrahydropteroyltriglutamate--homocysteine methyltransferase (753 aa).

5-methyltetrahydropteroyltri-L-glutamate is bound by residues 17–20 (RELK) and K117. L-homocysteine contacts are provided by residues 431–433 (IGS) and E484. L-methionine is bound by residues 431–433 (IGS) and E484. 5-methyltetrahydropteroyltri-L-glutamate is bound by residues 515–516 (RC) and W561. D599 lines the L-homocysteine pocket. Residue D599 participates in L-methionine binding. E605 lines the 5-methyltetrahydropteroyltri-L-glutamate pocket. The Zn(2+) site is built by H641, C643, and E665. Catalysis depends on H694, which acts as the Proton donor. C726 is a binding site for Zn(2+).

The protein belongs to the vitamin-B12 independent methionine synthase family. Requires Zn(2+) as cofactor.

It catalyses the reaction 5-methyltetrahydropteroyltri-L-glutamate + L-homocysteine = tetrahydropteroyltri-L-glutamate + L-methionine. It functions in the pathway amino-acid biosynthesis; L-methionine biosynthesis via de novo pathway; L-methionine from L-homocysteine (MetE route): step 1/1. In terms of biological role, catalyzes the transfer of a methyl group from 5-methyltetrahydrofolate to homocysteine resulting in methionine formation. This chain is 5-methyltetrahydropteroyltriglutamate--homocysteine methyltransferase, found in Shigella flexneri.